A 293-amino-acid chain; its full sequence is Glycine--tRNA ligase alpha subunit (293 aa).

It belongs to the class-II aminoacyl-tRNA synthetase family. In terms of assembly, tetramer of two alpha and two beta subunits.

It is found in the cytoplasm. It carries out the reaction tRNA(Gly) + glycine + ATP = glycyl-tRNA(Gly) + AMP + diphosphate. The sequence is that of Glycine--tRNA ligase alpha subunit from Sulfurimonas denitrificans (strain ATCC 33889 / DSM 1251) (Thiomicrospira denitrificans (strain ATCC 33889 / DSM 1251)).